The chain runs to 206 residues: Triafestin-1 (206 aa).

A signal peptide spans 1-18; it reads MKTILAVIFFGILAFAFA. The N-linked (GlcNAc...) asparagine glycan is linked to Asn-55.

It belongs to the calycin superfamily. Triabin family. In terms of assembly, interacts with host coagulation factor XII (F12) (inactive and activated) (via amino acids 1-77). Interacts with host high molecular weight kininogen (KNG1) (via amino acids 402-532). In terms of tissue distribution, salivary gland (at protein level).

Its subcellular location is the secreted. Its activity is regulated as follows. Zn(2+) modulates binding to host coagulation factor XII (F12) and high molecular weight kininogen (KNG1). Suppresses activation of the host plasma kallikrein-kinin system, leading to inhibition of the intrinsic coagulation pathway. Blocks host coagulation factor XII (F12) and prekallikrein (KLKB1) reciprocal activation without affecting their amidolytic activities. Blocks binding of host F12 and high molecular weight kininogen (KNG1) to negatively charged surfaces. Attenuates generation of bradykinin by interfering with activation of host kallikrein-kinin system. The protein is Triafestin-1 of Triatoma infestans (Assassin bug).